A 388-amino-acid chain; its full sequence is MKWLLLLGLVALSECIIHKVPLVRKKSLRRNLSEHGLLKDFLKKHNFNPASKYFPQAEAPTLIDEQPLENYLDMEYFGTIGIGTPAQDFTVIFDTGSSNLWVPSVYCSSLACTNHNRFNPQDSSTYQSTSGTVSITYGTGSMTGILGYDTVQVGGISDTNQIFGLSETEPGSFLYYAPFDGILGLAYPSISSSGATPVFDNIWNQGLVSQDLFSVYLSADDQSGSVVIFGGIDSSYYTGSLNWVPVSVEGYWQISVDSITMNGEAIACAEGCQAIVDTGTSLLTGPTSPIANIQSDIGASENSDGEMVVSCSAISSLPDIVFTINGIQYPVPPSAYILQSQGSCISGFQGMDVPTESGELWILGDVFIRQYFTVFDRANNQVGLAPVA.

The signal sequence occupies residues 1–15 (MKWLLLLGLVALSEC). 2 propeptides (activation peptide) span residues 16–40 (IIHKVPLVRKKSLRRNLSEHGLLKD) and 41–62 (FLKKHNFNPASKYFPQAEAPTL). Positions 76–385 (YFGTIGIGTP…DRANNQVGLA (310 aa)) constitute a Peptidase A1 domain. Asp94 is a catalytic residue. A disulfide bridge links Cys107 with Cys112. Ser130 is subject to Phosphoserine. A disulfide bridge connects residues Cys268 and Cys272. The active site involves Asp277. The cysteines at positions 311 and 344 are disulfide-linked.

It belongs to the peptidase A1 family. Pepsin A-2 is phosphorylated, but not pepsin A-3. In terms of processing, each pepsinogen is converted to corresponding pepsin at pH 2.0 in part as a result of the release of a 47 AA activation segment and in part as a result of stepwise proteolytic cleavage via an intermediate form(s).

It localises to the secreted. It catalyses the reaction Preferential cleavage: hydrophobic, preferably aromatic, residues in P1 and P1' positions. Cleaves 1-Phe-|-Val-2, 4-Gln-|-His-5, 13-Glu-|-Ala-14, 14-Ala-|-Leu-15, 15-Leu-|-Tyr-16, 16-Tyr-|-Leu-17, 23-Gly-|-Phe-24, 24-Phe-|-Phe-25 and 25-Phe-|-Tyr-26 bonds in the B chain of insulin.. In terms of biological role, shows particularly broad specificity; although bonds involving phenylalanine and leucine are preferred, many others are also cleaved to some extent. The sequence is that of Pepsin A-2/A-3 from Macaca fuscata fuscata (Japanese macaque).